The following is a 405-amino-acid chain: L-carnitine CoA-transferase (405 aa).

CoA contacts are provided by K97 and R104. D169 (nucleophile) is an active-site residue.

The protein belongs to the CoA-transferase III family. CaiB subfamily. Homodimer.

The protein resides in the cytoplasm. It catalyses the reaction crotonobetainyl-CoA + (R)-carnitine = crotonobetaine + (R)-carnitinyl-CoA. It carries out the reaction 4-(trimethylamino)butanoyl-CoA + (R)-carnitine = (R)-carnitinyl-CoA + 4-(trimethylamino)butanoate. The protein operates within amine and polyamine metabolism; carnitine metabolism. Functionally, catalyzes the reversible transfer of the CoA moiety from gamma-butyrobetainyl-CoA to L-carnitine to generate L-carnitinyl-CoA and gamma-butyrobetaine. Is also able to catalyze the reversible transfer of the CoA moiety from gamma-butyrobetainyl-CoA or L-carnitinyl-CoA to crotonobetaine to generate crotonobetainyl-CoA. This chain is L-carnitine CoA-transferase, found in Escherichia coli O7:K1 (strain IAI39 / ExPEC).